The following is a 252-amino-acid chain: Triosephosphate isomerase (252 aa).

10-12 (NWK) is a substrate binding site. The Electrophile role is filled by His96. Glu168 acts as the Proton acceptor in catalysis. Residues Gly174, Ser214, and 235-236 (GG) contribute to the substrate site.

It belongs to the triosephosphate isomerase family. Homodimer.

The protein resides in the cytoplasm. It carries out the reaction D-glyceraldehyde 3-phosphate = dihydroxyacetone phosphate. Its pathway is carbohydrate biosynthesis; gluconeogenesis. It participates in carbohydrate degradation; glycolysis; D-glyceraldehyde 3-phosphate from glycerone phosphate: step 1/1. Its function is as follows. Seems to be capable of enhancing bacteriocin synthesis. Involved in the gluconeogenesis. Catalyzes stereospecifically the conversion of dihydroxyacetone phosphate (DHAP) to D-glyceraldehyde-3-phosphate (G3P). The sequence is that of Triosephosphate isomerase from Lactobacillus delbrueckii subsp. lactis.